We begin with the raw amino-acid sequence, 214 residues long: Adenylate kinase (214 aa).

An ATP-binding site is contributed by 10–15 (GAGKGT). An NMP region spans residues 30–59 (STGDMLRAAVKAGTPLGLEAKKVMDAGQLV). AMP-binding positions include T31, R36, 57–59 (QLV), 85–88 (GFPR), and Q92. Residues 122-159 (GRRVHPGSGRVYHIVFNQPKVEGKDDVTGEDLAIRPDD) form an LID region. Residues R123 and 132–133 (VY) contribute to the ATP site. Positions 156 and 167 each coordinate AMP. Q200 serves as a coordination point for ATP.

This sequence belongs to the adenylate kinase family. As to quaternary structure, monomer.

The protein localises to the cytoplasm. It catalyses the reaction AMP + ATP = 2 ADP. The protein operates within purine metabolism; AMP biosynthesis via salvage pathway; AMP from ADP: step 1/1. Functionally, catalyzes the reversible transfer of the terminal phosphate group between ATP and AMP. Plays an important role in cellular energy homeostasis and in adenine nucleotide metabolism. In Shewanella piezotolerans (strain WP3 / JCM 13877), this protein is Adenylate kinase.